A 592-amino-acid polypeptide reads, in one-letter code: Arginine--tRNA ligase (592 aa).

The 'HIGH' region signature appears at 128 to 138 (ANPTGPLHVGH).

Belongs to the class-I aminoacyl-tRNA synthetase family. Monomer.

The protein resides in the cytoplasm. The enzyme catalyses tRNA(Arg) + L-arginine + ATP = L-arginyl-tRNA(Arg) + AMP + diphosphate. The polypeptide is Arginine--tRNA ligase (Hydrogenovibrio crunogenus (strain DSM 25203 / XCL-2) (Thiomicrospira crunogena)).